A 218-amino-acid polypeptide reads, in one-letter code: UPF0301 protein RPB_4502 (218 aa).

The segment at 1–26 is disordered; it reads MVTKSKRPKSGDRSGREPGNAGPIEQ.

The protein belongs to the UPF0301 (AlgH) family.

The chain is UPF0301 protein RPB_4502 from Rhodopseudomonas palustris (strain HaA2).